The chain runs to 270 residues: Orotidine 5'-phosphate decarboxylase (270 aa).

Substrate is bound by residues Asp-39, 61-63, 93-102, Tyr-221, and Arg-239; these read KTH and DRKFADIGNT. Lys-95 (proton donor) is an active-site residue.

This sequence belongs to the OMP decarboxylase family.

It catalyses the reaction orotidine 5'-phosphate + H(+) = UMP + CO2. The protein operates within pyrimidine metabolism; UMP biosynthesis via de novo pathway; UMP from orotate: step 2/2. The chain is Orotidine 5'-phosphate decarboxylase (URA3) from Candida dubliniensis (strain CD36 / ATCC MYA-646 / CBS 7987 / NCPF 3949 / NRRL Y-17841) (Yeast).